The primary structure comprises 459 residues: 3-carboxy-cis,cis-muconate cycloisomerase (459 aa).

This sequence belongs to the class-II fumarase/aspartase family. Homotetramer.

Its subcellular location is the cytoplasm. It carries out the reaction 2-(carboxymethyl)-5-oxo-2,5-dihydro-2-furoate = 3-carboxy-cis,cis-muconate + H(+). It participates in aromatic compound metabolism; beta-ketoadipate pathway; 5-oxo-4,5-dihydro-2-furylacetate from 3-carboxy-cis,cis-muconate: step 1/2. Its function is as follows. Catalyzes an anti cycloisomerization. This Pseudomonas aeruginosa (strain ATCC 15692 / DSM 22644 / CIP 104116 / JCM 14847 / LMG 12228 / 1C / PRS 101 / PAO1) protein is 3-carboxy-cis,cis-muconate cycloisomerase (pcaB).